A 164-amino-acid chain; its full sequence is Pathogenesis-related protein PRB1-2 (164 aa).

The N-terminal stretch at 1 to 24 is a signal peptide; sequence MQTPKLAILLALAMAAAMVNLSQA. Glutamine 25 carries the post-translational modification Pyrrolidone carboxylic acid. The SCP domain maps to 34–152; the sequence is PHNAARSAVG…NRGVFITCNY (119 aa). 3 disulfides stabilise this stretch: cysteine 68–cysteine 140, cysteine 113–cysteine 119, and cysteine 135–cysteine 150.

It belongs to the CRISP family.

Functionally, probably involved in the defense reaction of plants against pathogens. This chain is Pathogenesis-related protein PRB1-2, found in Hordeum vulgare (Barley).